A 289-amino-acid polypeptide reads, in one-letter code: uncharacterized protein (289 aa).

This is an uncharacterized protein from Schizosaccharomyces pombe (strain 972 / ATCC 24843) (Fission yeast).